The sequence spans 502 residues: Dipeptide and tripeptide permease A (502 aa).

Over 1–35 the chain is Cytoplasmic; it reads MSTANNKPTDESVSLNAFKQPKAFYLIFSIELWER. Residues 36–56 form a helical membrane-spanning segment; sequence FGFYGLQGIMAVYLVKQLGMS. Over 57-60 the chain is Periplasmic; that stretch reads EADS. The chain crosses the membrane as a helical span at residues 61–81; it reads ITLFSSFSALVYGLVAVGGWL. Topologically, residues 82 to 90 are cytoplasmic; it reads GDKVLGTKR. A helical membrane pass occupies residues 91 to 111; it reads VIMLGAVVLAIGYGLVAWSGH. A topological domain (periplasmic) is located at residue Asp-112. The helical transmembrane segment at 113–133 threads the bilayer; it reads AAVVYMGMATIAVGNGLFKAN. Topologically, residues 134–154 are cytoplasmic; that stretch reads PSSLLSTCYNKDDPRLDGAFT. A helical membrane pass occupies residues 155 to 175; that stretch reads MYYMSINIGSFFSMLATPWLA. Residues 176 to 179 lie on the Periplasmic side of the membrane; sequence AKFG. A helical membrane pass occupies residues 180-200; the sequence is WSVAFALSFVGMLITVVNFLF. Topologically, residues 201–218 are cytoplasmic; it reads CRSWVKNYGSKPDFEPVH. A helical transmembrane segment spans residues 219-239; the sequence is IGKLLATIVGVVILATIATWL. Residues 240–247 lie on the Periplasmic side of the membrane; the sequence is LHNQGVAR. The chain crosses the membrane as a helical span at residues 248-268; sequence AVLGVVALGIICIFAKEAFAM. At 269-275 the chain is on the cytoplasmic side; that stretch reads QGAARRK. The chain crosses the membrane as a helical span at residues 276–296; that stretch reads MIVAFILMLQAVVFFVLYSQM. Residues 297–321 lie on the Periplasmic side of the membrane; that stretch reads PTSLNFFAIRNVEHSILSIAFEPEQ. The helical transmembrane segment at 322-342 threads the bilayer; sequence FQALNPFWIMIGSPILAAIYN. The Cytoplasmic segment spans residues 343 to 353; it reads KMGDRLPMPHK. Residues 354–374 form a helical membrane-spanning segment; sequence FAIGMVLCSGAFLVLPLGTKF. The Periplasmic segment spans residues 375–384; that stretch reads ATDAGIVSVN. A helical transmembrane segment spans residues 385–405; the sequence is WLILSYALQSIGELMISGLGL. Topologically, residues 406-415 are cytoplasmic; the sequence is AMVAQLVPQR. Residues 416–436 form a helical membrane-spanning segment; the sequence is LMGFIMGSWFLTTAGAALIAG. Topologically, residues 437 to 460 are periplasmic; it reads KIANLMAVPENVTDPLVSLEVYGR. The chain crosses the membrane as a helical span at residues 461–481; the sequence is VFMQIGIATAVIAVLMLLTAP. The Cytoplasmic segment spans residues 482-502; that stretch reads KLNRMTLEDDKAAKATDTATA.

This sequence belongs to the major facilitator superfamily. Proton-dependent oligopeptide transporter (POT/PTR) (TC 2.A.17) family. DtpA subfamily.

It is found in the cell inner membrane. Its function is as follows. Proton-dependent permease that transports di- and tripeptides. The polypeptide is Dipeptide and tripeptide permease A (Enterobacter sp. (strain 638)).